Consider the following 127-residue polypeptide: Probable tautomerase YusQ (127 aa).

The Proton acceptor; via imino nitrogen role is filled by proline 2.

Belongs to the 4-oxalocrotonate tautomerase family.

In Bacillus subtilis (strain 168), this protein is Probable tautomerase YusQ (yusQ).